Reading from the N-terminus, the 299-residue chain is Probable alpha-L-glutamate ligase (299 aa).

Residues Leu104 to Glu287 form the ATP-grasp domain. Residues Lys141, Glu178 to Phe179, Asp187, and Arg211 to Asn213 each bind ATP. Residues Asp248, Glu260, and Asn262 each contribute to the Mg(2+) site. Mn(2+) contacts are provided by Asp248, Glu260, and Asn262.

This sequence belongs to the RimK family. Mg(2+) serves as cofactor. Mn(2+) is required as a cofactor.

In Trichodesmium erythraeum (strain IMS101), this protein is Probable alpha-L-glutamate ligase.